The chain runs to 246 residues: uncharacterized protein (246 aa).

This is an uncharacterized protein from Acidianus sp. F28 (AFV-2).